Reading from the N-terminus, the 348-residue chain is Phospho-2-dehydro-3-deoxyheptonate aldolase, Trp-sensitive (348 aa).

Belongs to the class-I DAHP synthase family.

It catalyses the reaction D-erythrose 4-phosphate + phosphoenolpyruvate + H2O = 7-phospho-2-dehydro-3-deoxy-D-arabino-heptonate + phosphate. It functions in the pathway metabolic intermediate biosynthesis; chorismate biosynthesis; chorismate from D-erythrose 4-phosphate and phosphoenolpyruvate: step 1/7. Functionally, stereospecific condensation of phosphoenolpyruvate (PEP) and D-erythrose-4-phosphate (E4P) giving rise to 3-deoxy-D-arabino-heptulosonate-7-phosphate (DAHP). The protein is Phospho-2-dehydro-3-deoxyheptonate aldolase, Trp-sensitive (aroH) of Escherichia coli (strain K12).